The following is a 419-amino-acid chain: S-adenosylmethionine synthase (419 aa).

His-15 lines the ATP pocket. Asp-17 contacts Mg(2+). Glu-43 provides a ligand contact to K(+). Residues Glu-56 and Gln-100 each contribute to the L-methionine site. Positions 100–110 are flexible loop; it reads QSPDIAQGVDE. Residues 171-173, 248-249, Asp-257, 263-264, Ala-280, and Lys-284 contribute to the ATP site; these read DGK, KF, and RK. Asp-257 contacts L-methionine. An L-methionine-binding site is contributed by Lys-288.

It belongs to the AdoMet synthase family. As to quaternary structure, homotetramer; dimer of dimers. Mg(2+) serves as cofactor. It depends on K(+) as a cofactor.

The protein localises to the cytoplasm. It carries out the reaction L-methionine + ATP + H2O = S-adenosyl-L-methionine + phosphate + diphosphate. It participates in amino-acid biosynthesis; S-adenosyl-L-methionine biosynthesis; S-adenosyl-L-methionine from L-methionine: step 1/1. In terms of biological role, catalyzes the formation of S-adenosylmethionine (AdoMet) from methionine and ATP. The overall synthetic reaction is composed of two sequential steps, AdoMet formation and the subsequent tripolyphosphate hydrolysis which occurs prior to release of AdoMet from the enzyme. The sequence is that of S-adenosylmethionine synthase from Parasynechococcus marenigrum (strain WH8102).